A 1290-amino-acid polypeptide reads, in one-letter code: MPPKKTKTSTAVAREATESPMAERSRAPDALQADPPAPTQESNNELVDSRSLEEILSGIPPPPPPAMTNEAGAPRLMITHIVNQNFKSYAGERILGPFHKRFSCIIGPNGSGKSNVIDSMLFVFGYRAQKIRSKKLSVLIHNSDEHKDVQSCTVEVHFQKIIDKEGDDFEVIPNSNFYVSRTAYKDNSSVYHISGKKATFKDVGLLLRSHGIDLDHNRFLILQGEVEQIAMMKPKGQTEHDEGMLEYLEDIIGSERLKEPIQILCRRVELLNEQRGEKLNRVKMVEKEKDALEGEKNKAIEFLTVENETFKKKNQLCQYYIHDLQKRSRDKEAQKEKIQEDTKDISEKSNTLLETMKEKNKALKDVEKQLNKITKFIEENREKFTQLDLQDVDTREKLKHSKSKVKKLQKQLQKDKEKVDELKNVPANSQKIIAEETNKKDLLEKQKEKEEEKLKNVMDSLKKETQGLQEEKEVKEKELMEISKTVNEARSKMDVAQSELDIYLSRHNSALSQLNKAKEALNTASATLKERRAAIKELETKLPKDEGDLKKREKELESLVSEEGNIKNQVRELRQKVEEARSSLSANRSRGKVLDALIQQKKSGKIPGIFGRLGDLGAIDEKYDVAISSSCGALDHIVVDTIDTAQECVNFLKKQNVGVATFIGLDKMKVWEKGLNKIQTPENIPRLFDMVKVKDEQIKPAFYFALRDTIVANNLDQATRVAFQKDKRWRVVTLQGQIIEQSGTMTGGGGKVMKGRMGSSVMVEISDDQLQKMENKLKTDTTRATEIQDRKAHLEEEVAKLRQATREMKNTFEKYTASLQSLSEQEVHLKAQVKELEVNVAAAAPDKNQQKQMEKNLETLKKEYEKVAEKAGKVEAEVKRLHKLIVDINNHKLKAQQDKLDKVTKEIDECASAITKAQVSIKTADRNLKKSEEAVARTEKEIVANDKSIEELTEDLKKLEEKATTVMNECKEAECSLPEVQEQHRSLLQEIKAIQEKEHALQKEALNIRLNIEQIDSHIAEHQSKIKYWQKEITKISLHKIEDIPEEVLPGLAQEELEAIKDPDQIINQIALLEAKSHEMKPNLGAIAEYKKKEELYLQRVAELDEITNERDSFRRAYEDLRKQRLNEFMAGFNIITNKLKENYQMLTLGGDAELELVDSLDPFSEGIMFSVRPPKKSWKKIFNLSGGEKTLSSLALVFALHHYKPTPLYFMDEIDAALDFKNVSIVAFYIYEQTKNAQFIIISLRNNMFEIADRLIGIYKTHNTTKSVATNPKIIAAKGLAEMQSVGCA.

The tract at residues 1 to 48 (MPPKKTKTSTAVAREATESPMAERSRAPDALQADPPAPTQESNNELVD) is disordered. The span at 15–27 (EATESPMAERSRA) shows a compositional bias: basic and acidic residues. Residue 107 to 114 (GPNGSGKS) coordinates ATP. The stretch at 264 to 594 (LCRRVELLNE…SANRSRGKVL (331 aa)) forms a coiled coil. The region spanning 607–721 (PGIFGRLGDL…ANNLDQATRV (115 aa)) is the SMC hinge domain. 2 coiled-coil regions span residues 764–1027 (EISD…SKIK) and 1094–1129 (EELY…LNEF).

This sequence belongs to the SMC family. SMC4 subfamily. As to quaternary structure, forms a heterodimer with XCAP-E/SMC2. Component of the condensin complex, which contains the XCAP-E/SMC2 and XCAP-C/SMC4 heterodimer, and three non SMC subunits that probably regulate the complex: XCAP-H/BRRN1, XCAP-D2/CNAP1 and XCAP-G/CAPG.

The protein localises to the nucleus. It localises to the cytoplasm. It is found in the chromosome. Central component of the condensin complex, a complex required for conversion of interphase chromatin into mitotic-like condense chromosomes. The condensin complex probably introduces positive supercoils into relaxed DNA in the presence of type I topoisomerases and converts nicked DNA into positive knotted forms in the presence of type II topoisomerase. The sequence is that of Structural maintenance of chromosomes protein 4 (smc4) from Xenopus laevis (African clawed frog).